The primary structure comprises 300 residues: Mycothiol acetyltransferase (300 aa).

N-acetyltransferase domains lie at 4 to 140 (IDWR…RPLT) and 151 to 300 (VRLA…AVAD). Asp-36 is a binding site for 1D-myo-inositol 2-(L-cysteinylamino)-2-deoxy-alpha-D-glucopyranoside. 79–81 (LVV) contributes to the acetyl-CoA binding site. 1D-myo-inositol 2-(L-cysteinylamino)-2-deoxy-alpha-D-glucopyranoside contacts are provided by Glu-178, Lys-219, and Glu-227. Acetyl-CoA is bound at residue 231 to 233 (VGV). Position 269 (Tyr-269) interacts with 1D-myo-inositol 2-(L-cysteinylamino)-2-deoxy-alpha-D-glucopyranoside. An acetyl-CoA-binding site is contributed by 274–279 (NGAAVK).

The protein belongs to the acetyltransferase family. MshD subfamily. In terms of assembly, monomer.

It carries out the reaction 1D-myo-inositol 2-(L-cysteinylamino)-2-deoxy-alpha-D-glucopyranoside + acetyl-CoA = mycothiol + CoA + H(+). Its function is as follows. Catalyzes the transfer of acetyl from acetyl-CoA to desacetylmycothiol (Cys-GlcN-Ins) to form mycothiol. This Mycobacterium sp. (strain MCS) protein is Mycothiol acetyltransferase.